We begin with the raw amino-acid sequence, 492 residues long: MIITQMSQFYMAGLGLLFLINILPGTTGQVESRRQEPGDFVKQDIGGLSPKHAPDIPDDSTDNITIFTRILDRLLDGYDNRLRPGLGDAVTEVKTDIYVTSFGPVSDTDMEYTIDVFFRQTWHDERLKFDGPMKILPLNNLLASKIWTPDTFFHNGKKSVAHNMTTPNKLLRLVDNGTLLYTMRLTIHAECPMHLEDFPMDVHACPLKFGSYAYTTAEVVYSWTLGKNKSVEVAQDGSRLNQYDLLGHVVGTEIIRSSTGEYVVMTTHFHLKRKIGYFVIQTYLPCIMTVILSQVSFWLNRESVPARTVFGVTTVLTMTTLSISARNSLPKVAYATAMDWFMAVCYAFVFSALIEFATVNYFTKRSWAWEGKKVPEALEMKKKTPAVPTKKTSTTFNIVGTTYPINLAKDTEFSAISKGAAPSTSSTPTIIASPKTTCVQDIPTETKTYNSVSKVDKISRIIFPVLFAIFNLVYWATYVNRESAIKGMIRKQ.

An N-terminal signal peptide occupies residues 1–28; it reads MIITQMSQFYMAGLGLLFLINILPGTTG. Over 29 to 274 the chain is Extracellular; sequence QVESRRQEPG…MTTHFHLKRK (246 aa). N63 carries N-linked (GlcNAc...) asparagine glycosylation. Residue R119 participates in 4-aminobutanoate binding. 2 N-linked (GlcNAc...) asparagine glycosylation sites follow: N163 and N176. Position 182 (T182) interacts with 4-aminobutanoate. C191 and C205 are disulfide-bonded. Residue N228 is glycosylated (N-linked (GlcNAc...) asparagine). Residues 275–295 form a helical membrane-spanning segment; sequence IGYFVIQTYLPCIMTVILSQV. The Cytoplasmic portion of the chain corresponds to 296–305; the sequence is SFWLNRESVP. Residues 306-325 form a helical membrane-spanning segment; it reads ARTVFGVTTVLTMTTLSISA. Topologically, residues 326–336 are extracellular; that stretch reads RNSLPKVAYAT. Residues 337-357 form a helical membrane-spanning segment; the sequence is AMDWFMAVCYAFVFSALIEFA. The Cytoplasmic portion of the chain corresponds to 358-457; sequence TVNYFTKRSW…TYNSVSKVDK (100 aa). A Phosphoserine modification is found at S426. T427 carries the post-translational modification Phosphothreonine. At S433 the chain carries Phosphoserine. Residues 458–478 traverse the membrane as a helical segment; that stretch reads ISRIIFPVLFAIFNLVYWATY. The Extracellular portion of the chain corresponds to 479-492; that stretch reads VNRESAIKGMIRKQ.

The protein belongs to the ligand-gated ion channel (TC 1.A.9) family. Gamma-aminobutyric acid receptor (TC 1.A.9.5) subfamily. GABRA3 sub-subfamily. Heteropentamer, formed by a combination of alpha (GABRA1-6), beta (GABRB1-3), gamma (GABRG1-3), delta (GABRD), epsilon (GABRE), rho (GABRR1-3), pi (GABRP) and theta (GABRQ) chains, each subunit exhibiting distinct physiological and pharmacological properties. Binds UBQLN1. Interacts with GPHN.

It localises to the postsynaptic cell membrane. The protein localises to the cell membrane. It catalyses the reaction chloride(in) = chloride(out). Its function is as follows. Alpha subunit of the heteropentameric ligand-gated chloride channel gated by gamma-aminobutyric acid (GABA), a major inhibitory neurotransmitter in the brain. GABA-gated chloride channels, also named GABA(A) receptors (GABAAR), consist of five subunits arranged around a central pore and contain GABA active binding site(s) located at the alpha and beta subunit interface(s). When activated by GABA, GABAARs selectively allow the flow of chloride anions across the cell membrane down their electrochemical gradient. Chloride influx into the postsynaptic neuron following GABAAR opening decreases the neuron ability to generate a new action potential, thereby reducing nerve transmission. The protein is Gamma-aminobutyric acid receptor subunit alpha-3 (GABRA3) of Bos taurus (Bovine).